The sequence spans 457 residues: ATP synthase subunit beta (457 aa).

147 to 154 is an ATP binding site; that stretch reads GGAGVGKT.

Belongs to the ATPase alpha/beta chains family. As to quaternary structure, F-type ATPases have 2 components, CF(1) - the catalytic core - and CF(0) - the membrane proton channel. CF(1) has five subunits: alpha(3), beta(3), gamma(1), delta(1), epsilon(1). CF(0) has three main subunits: a(1), b(2) and c(9-12). The alpha and beta chains form an alternating ring which encloses part of the gamma chain. CF(1) is attached to CF(0) by a central stalk formed by the gamma and epsilon chains, while a peripheral stalk is formed by the delta and b chains.

The protein localises to the cell inner membrane. It carries out the reaction ATP + H2O + 4 H(+)(in) = ADP + phosphate + 5 H(+)(out). Its function is as follows. Produces ATP from ADP in the presence of a proton gradient across the membrane. The catalytic sites are hosted primarily by the beta subunits. This Histophilus somni (strain 129Pt) (Haemophilus somnus) protein is ATP synthase subunit beta.